Here is a 385-residue protein sequence, read N- to C-terminus: Citrate synthase (385 aa).

Active-site residues include histidine 223, histidine 263, and aspartate 318.

This sequence belongs to the citrate synthase family. In terms of assembly, homodimer.

The catalysed reaction is oxaloacetate + acetyl-CoA + H2O = citrate + CoA + H(+). It participates in carbohydrate metabolism; tricarboxylic acid cycle; isocitrate from oxaloacetate: step 1/2. With respect to regulation, allosterically inhibited by NADH. The chain is Citrate synthase (gltA) from Thermoplasma acidophilum (strain ATCC 25905 / DSM 1728 / JCM 9062 / NBRC 15155 / AMRC-C165).